The primary structure comprises 420 residues: UDP-N-acetylglucosamine 1-carboxyvinyltransferase (420 aa).

22-23 (KN) is a phosphoenolpyruvate binding site. Arg-92 is a UDP-N-acetyl-alpha-D-glucosamine binding site. Cys-116 (proton donor) is an active-site residue. A 2-(S-cysteinyl)pyruvic acid O-phosphothioketal modification is found at Cys-116. Residues 121–125 (RPVDQ), Asp-304, and Ile-326 contribute to the UDP-N-acetyl-alpha-D-glucosamine site.

It belongs to the EPSP synthase family. MurA subfamily.

The protein resides in the cytoplasm. The enzyme catalyses phosphoenolpyruvate + UDP-N-acetyl-alpha-D-glucosamine = UDP-N-acetyl-3-O-(1-carboxyvinyl)-alpha-D-glucosamine + phosphate. It participates in cell wall biogenesis; peptidoglycan biosynthesis. Its function is as follows. Cell wall formation. Adds enolpyruvyl to UDP-N-acetylglucosamine. The protein is UDP-N-acetylglucosamine 1-carboxyvinyltransferase of Paraburkholderia xenovorans (strain LB400).